The chain runs to 468 residues: UDP-glycosyltransferase 89B2 (468 aa).

UDP-alpha-D-glucose is bound by residues S287, 347–348, 365–373, and 387–390; these read WV, HCGWNSVME, and SADQ.

It belongs to the UDP-glycosyltransferase family.

In terms of biological role, may glycosylate diterpenes or flavonols in leaves. The chain is UDP-glycosyltransferase 89B2 from Stevia rebaudiana (Stevia).